The primary structure comprises 104 residues: UPF0213 protein VIBHAR_05350 (104 aa).

The region spanning 7 to 82 (QRWSVYLIRN…KQLTKTKKEL (76 aa)) is the GIY-YIG domain.

It belongs to the UPF0213 family.

In Vibrio campbellii (strain ATCC BAA-1116), this protein is UPF0213 protein VIBHAR_05350.